The chain runs to 470 residues: V-type ATP synthase beta chain (470 aa).

Belongs to the ATPase alpha/beta chains family.

In terms of biological role, produces ATP from ADP in the presence of a proton gradient across the membrane. The V-type beta chain is a regulatory subunit. This chain is V-type ATP synthase beta chain, found in Deinococcus geothermalis (strain DSM 11300 / CIP 105573 / AG-3a).